Here is a 784-residue protein sequence, read N- to C-terminus: Repetin (784 aa).

The tract at residues 1–91 is S-100-like; sequence MAQLLNSILS…VQACYHKLDN (91 aa). EF-hand domains follow at residues 13 to 48 and 49 to 84; these read DVFHKYAKGNGDCALLCKEELKQLLLAEFGDILQRP and NDPETVETILNLLDQDRDGHIDFHEYLLLVFQLVQA. Residues glutamate 32, aspartate 62, aspartate 64, aspartate 66, histidine 68, and glutamate 73 each contribute to the Ca(2+) site. 4 disordered regions span residues 92-221, 282-584, 601-661, and 677-784; these read KSHG…QAKW, GCGQ…SHYI, TEGT…HQHK, and RDWQ…NHQR. Over residues 124 to 201 the composition is skewed to basic and acidic residues; the sequence is RHEEERQNSH…FSFDQSERQS (78 aa). Polar residues-rich tracts occupy residues 286–296, 304–343, 356–392, 400–486, 504–584, 610–646, and 680–695; these read TDRQGQSSHYG, SYHYGQTDRQGQSSHYSQTDRQGQSSHYSQPDRQGQSSHY, DQTNRQGQGSHYSQPNRQGQSSHYGQPDTQDQSSHYG, SSHY…QSSH, GQGQ…SHYI, VEQSGRSGRLSQQTPGQEGYQNQGQGFQSRDSQQNGH, and QSCSSEQGHRQAQTRQ. Composition is skewed to basic and acidic residues over residues 704-722 and 729-784; these read WAEEEQGHQTWDRHSHESQ and QDRR…NHQR.

Belongs to the S100-fused protein family. Post-translationally, potential substrate of transglutaminase. Some arginines are probably converted to citrullines by peptidylarginine deimidase. As to expression, expression is scattered in the normal epidermis but strong in the acrosyringium, the inner hair root sheath and in the filiform papilli of the tongue.

The protein resides in the secreted. Its subcellular location is the extracellular space. The protein localises to the extracellular matrix. Involved in the cornified cell envelope formation. Multifunctional epidermal matrix protein. Reversibly binds calcium. The sequence is that of Repetin (RPTN) from Homo sapiens (Human).